The sequence spans 259 residues: Glandular kallikrein-10 (259 aa).

A signal peptide spans 1–18 (MWFLILFLALSLGGIDAA). Positions 19 to 24 (PPGQSR) are cleaved as a propeptide — activation peptide. A Peptidase S1 domain is found at 25–256 (IVGGYKCEKN…FTSWIKEVMK (232 aa)). 5 disulfides stabilise this stretch: C31–C171, C48–C64, C150–C217, C182–C196, and C207–C232. H63 acts as the Charge relay system in catalysis. N-linked (GlcNAc...) asparagine glycans are attached at residues N91 and N106. D118 functions as the Charge relay system in the catalytic mechanism. The Charge relay system role is filled by S211.

This sequence belongs to the peptidase S1 family. Kallikrein subfamily. Heterodimer of a light chain and heavy chain linked by a disulfide bond. Post-translationally, probably N- and O-glycosylated. Kidney and submandibular gland, where it is found in the granular convoluted tubule and striated duct cells. It is likely that the enzyme is mainly synthesized in the granular convoluted tubules and then transferred to other tissues by release into the vasculature or interstitial space.

The enzyme catalyses Preferential cleavage of Arg-|-Xaa bonds in small molecule substrates. Highly selective action to release kallidin (lysyl-bradykinin) from kininogen involves hydrolysis of Met-|-Xaa or Leu-|-Xaa.. Its function is as follows. Glandular kallikreins cleave Met-Lys and Arg-Ser bonds in kininogen to release Lys-bradykinin. This protein may be involved in the regulation of renal function. The chain is Glandular kallikrein-10 (Klk10) from Rattus norvegicus (Rat).